The following is a 2113-amino-acid chain: Unconventional myosin-VIIb (2113 aa).

Residues 65–760 (QGVDDMIRLG…QDTVLEIRRS (696 aa)) form the Myosin motor domain. 158-165 (GESGAGKT) serves as a coordination point for ATP. Residues 637 to 659 (LDQLMRILTNCQPYFVRCIKPNE) are actin-binding. IQ domains lie at 745–765 (IFLK…ALDG), 763–792 (LDGA…AAVT), 786–815 (QRRA…GFER), 809–838 (ILVG…RIVQ), 832–861 (MRQR…AVVI), and 855–884 (KRRA…TGPQ). The residue at position 904 (S904) is a Phosphoserine. The tract at residues 962–1578 (EEEVDSLAEY…STQLLSLLAM (617 aa)) is mediates interaction with ANKS4B. In terms of domain architecture, MyTH4 1 spans 989 to 1189 (HIQKPLRYPL…PTWLELQAVK (201 aa)). One can recognise an FERM 1 domain in the interval 1194 to 1503 (IPIQVILATG…GGLKERSVFA (310 aa)). T1339 bears the Phosphothreonine mark. S1368 carries the phosphoserine modification. The interval 1497 to 2113 (KERSVFAMAL…GFRAPAPANP (617 aa)) is mediates interaction with CDHR2, CDHR5 and USH1C. The SH3 domain maps to 1498 to 1564 (ERSVFAMALQ…PTACLYTIPS (67 aa)). 2 MyTH4 domains span residues 1641–1790 (YSPE…KAAE) and 1790–1896 (EQNV…LNVT). S1642 carries the phosphoserine modification. One can recognise an FERM 2 domain in the interval 1796-2099 (LHHEVYLPND…SYVQQLLNTV (304 aa)).

This sequence belongs to the TRAFAC class myosin-kinesin ATPase superfamily. Myosin family. As to quaternary structure, part of the IMAC/intermicrovillar adhesion complex/intermicrovillar tip-link complex composed of ANKS4B, MYO7B, USH1C, CDHR2 and CDHR5. Interacts with CDHR2. Interacts with CDHR5. Interacts with USH1C. Interacts with ANKS4B; requires initial interaction with USH1C. Interacts with CALML4; the interaction mediates the association of CALML4 with the IMAC/intermicrovillar adhesion complex. In terms of tissue distribution, expressed primarily in kidney and intestine. Detected in proximal tubule cells of the kidney and enterocytes of the intestine, specifically the distal tips of apical microvilli on these transporting epithelial cells (at protein level).

It localises to the cytoplasm. Its subcellular location is the cytoskeleton. It is found in the cell projection. The protein localises to the microvillus. Its function is as follows. Myosins are actin-based motor molecules with ATPase activity. Their highly divergent tails are presumed to bind to membranous compartments, which would be moved relative to actin filaments. As part of the intermicrovillar adhesion complex/IMAC plays a role in epithelial brush border differentiation, controlling microvilli organization and length. May link the complex to the actin core bundle of microvilli. In Mus musculus (Mouse), this protein is Unconventional myosin-VIIb (Myo7b).